A 644-amino-acid polypeptide reads, in one-letter code: Protein cueball (644 aa).

The N-terminal stretch at 1 to 26 (MIRIRFGMDVLLVLLLATCLLSPAHG) is a signal peptide. Topologically, residues 27-531 (TPLEWDFAVT…VCLTPKVWTS (505 aa)) are extracellular. N-linked (GlcNAc...) asparagine glycosylation is found at asparagine 82 and asparagine 108. LDL-receptor class B repeat units lie at residues 121–166 (MNLF…DVCR), 167–211 (RKLY…DQLS), and 212–257 (DRLF…TNDA). 3 N-linked (GlcNAc...) asparagine glycosylation sites follow: asparagine 175, asparagine 190, and asparagine 196. N-linked (GlcNAc...) asparagine glycosylation occurs at asparagine 313. EGF-like domains follow at residues 398 to 430 (EIRECHNYCVHGTCQMSESAYPKCYCQPGFTGE) and 433 to 471 (EVSVCAGLCLNGGHCRASKDEKEAPSCECPAKFGGARCE). 5 disulfide bridges follow: cysteine 402/cysteine 411, cysteine 406/cysteine 421, cysteine 437/cysteine 447, cysteine 441/cysteine 459, and cysteine 461/cysteine 470. 2 N-linked (GlcNAc...) asparagine glycosylation sites follow: asparagine 473 and asparagine 508. A helical transmembrane segment spans residues 532–552 (SVIIILVIGIVSSLLLVAVIV). Residues 553–644 (HGIRRLYKPK…LIHNMEDDLY (92 aa)) lie on the Cytoplasmic side of the membrane.

The protein belongs to the cueball family.

The protein localises to the cell membrane. Has a role in spermatogenesis and oogenesis. In Drosophila erecta (Fruit fly), this protein is Protein cueball.